The primary structure comprises 154 residues: Ribonuclease H (154 aa).

The RNase H type-1 domain maps to 1 to 142 (MLKKIDLYTD…CDELAREAAS (142 aa)). Mg(2+) contacts are provided by Asp-10, Glu-48, Asp-70, and Asp-134. Residues 133–154 (CDELAREAASGKQLAEDTGYQP) are disordered.

The protein belongs to the RNase H family. Monomer. Mg(2+) is required as a cofactor.

The protein resides in the cytoplasm. The enzyme catalyses Endonucleolytic cleavage to 5'-phosphomonoester.. In terms of biological role, endonuclease that specifically degrades the RNA of RNA-DNA hybrids. The chain is Ribonuclease H from Aeromonas hydrophila subsp. hydrophila (strain ATCC 7966 / DSM 30187 / BCRC 13018 / CCUG 14551 / JCM 1027 / KCTC 2358 / NCIMB 9240 / NCTC 8049).